Reading from the N-terminus, the 227-residue chain is LysM and putative peptidoglycan-binding domain-containing protein 1 (227 aa).

The segment covering 1-11 (MASPSRQPPPG) has biased composition (pro residues). The disordered stretch occupies residues 1-22 (MASPSRQPPPGGSGLLQGSRAR). 2 positions are modified to phosphoserine: S23 and S33. The LysM domain occupies 40–84 (LEHQLEPGDTLAGLALKYGVTMEQIKRANRLYTNDSIFLKKTLYI). Residues 97-150 (LDSEEEKDGEEKVHPSNSEVWPHSTERKKQETGAGRANGEVLPTPGQETPTPIH) form a disordered region. 4 positions are modified to phosphoserine: S99, S166, S194, and S212.

This is LysM and putative peptidoglycan-binding domain-containing protein 1 (LYSMD1) from Homo sapiens (Human).